The sequence spans 223 residues: Small ribosomal subunit protein uS3 (223 aa).

Positions 38 to 106 (IKKYLKSKLA…EVHLNIVEIR (69 aa)) constitute a KH type-2 domain.

It belongs to the universal ribosomal protein uS3 family. As to quaternary structure, part of the 30S ribosomal subunit. Forms a tight complex with proteins S10 and S14.

Functionally, binds the lower part of the 30S subunit head. Binds mRNA in the 70S ribosome, positioning it for translation. This is Small ribosomal subunit protein uS3 from Rhodospirillum rubrum (strain ATCC 11170 / ATH 1.1.1 / DSM 467 / LMG 4362 / NCIMB 8255 / S1).